Reading from the N-terminus, the 239-residue chain is Ribonuclease PH (239 aa).

Phosphate contacts are provided by residues Arg87 and 125-127 (GTR).

The protein belongs to the RNase PH family. Homohexameric ring arranged as a trimer of dimers.

It catalyses the reaction tRNA(n+1) + phosphate = tRNA(n) + a ribonucleoside 5'-diphosphate. Its function is as follows. Phosphorolytic 3'-5' exoribonuclease that plays an important role in tRNA 3'-end maturation. Removes nucleotide residues following the 3'-CCA terminus of tRNAs; can also add nucleotides to the ends of RNA molecules by using nucleoside diphosphates as substrates, but this may not be physiologically important. Probably plays a role in initiation of 16S rRNA degradation (leading to ribosome degradation) during starvation. This chain is Ribonuclease PH, found in Cellvibrio japonicus (strain Ueda107) (Pseudomonas fluorescens subsp. cellulosa).